Here is a 142-residue protein sequence, read N- to C-terminus: Small heat shock protein IbpB (142 aa).

Residues 26 to 137 (AGESQSFPPY…APQRIAISER (112 aa)) form the sHSP domain.

The protein belongs to the small heat shock protein (HSP20) family. Homodimer. Forms homomultimers of about 100-150 subunits at optimal growth temperatures. Conformation changes to oligomers at high temperatures or high ionic concentrations. The decrease in size of the multimers is accompanied by an increase in chaperone activity.

Its subcellular location is the cytoplasm. Associates with aggregated proteins, together with IbpA, to stabilize and protect them from irreversible denaturation and extensive proteolysis during heat shock and oxidative stress. Aggregated proteins bound to the IbpAB complex are more efficiently refolded and reactivated by the ATP-dependent chaperone systems ClpB and DnaK/DnaJ/GrpE. Its activity is ATP-independent. This Klebsiella pneumoniae (strain 342) protein is Small heat shock protein IbpB.